Consider the following 1159-residue polypeptide: CRISPR-associated endoribonuclease Cas13a (1159 aa).

Residues 1 to 11 (MKVTKVGGISH) are binds crRNA repeat and spacer. The segment at 1-170 (MKVTKVGGIS…NNIEKVEGKS (170 aa)) is NTD. 6 binds crRNA repeat regions span residues 139 to 151 (NKIN…FEKN), 172 to 176 (RNIIY), 224 to 233 (REFYHEIIGR), 271 to 276 (QVFYKY), 294 to 297 (HFVE), and 301 to 305 (SQLLK). The helical-1 stretch occupies residues 171 to 360 (KRNIIYDYYR…YNYYLQDGEI (190 aa)). The segment at 319–328 (KIKRIFEYQN) is binds crRNA processing site. Binds crRNA repeat regions lie at residues 336 to 340 (KLLNK) and 371 to 378 (QNEAFLRN). Positions 361–508 (ATSDFIARNR…SKKMFQNEIN (148 aa)) are HEPN-like fold 1-I. Residues R472 and H477 each act as for target RNA cleavage in the active site. The helical-2 stretch occupies residues 509-751 (EKKLKLKIFR…EFLREIKLGN (243 aa)). Residues 519–522 (QLNS) form a binds target RNA region. Residues 547-558 (NKNIPFVPSFTK) form a binds crRNA spacer region. The tract at residues 590 to 597 (DAQIYLLK) is binds target RNA. A binds crRNA spacer region spans residues 718–722 (KQEFD). The tract at residues 752-813 (ILKYTERLNM…NLDNNRVTED (62 aa)) is HEPN-like fold 1-II. The tract at residues 780–783 (SLEK) is binds crRNA repeat. The segment at 804-810 (NLDNNRV) is binds crRNA spacer and target RNA. The segment at 814-946 (FELEADEIGK…EYTHLKNKVE (133 aa)) is linker. Binds crRNA spacer stretches follow at residues 845–857 (KIYF…IKHR) and 938–942 (YTHLK). Residues 880-946 (YKISIEELKK…EYTHLKNKVE (67 aa)) are a coiled coil. The interval 947 to 1159 (FNELNLLQGL…YKMEEKKSEN (213 aa)) is HEPN-like fold 2. A binds crRNA repeat region spans residues 962-963 (HR). A binds 3'-end of target RNA, in adjacent protein region spans residues 995 to 998 (FENK). Catalysis depends on for target RNA cleavage residues R1048 and H1053. 2 binds crRNA processing site regions span residues 1072–1082 (RKLLSYDRKLK) and 1104–1108 (IGADK).

It belongs to the CRISPR-associated endoribonuclease Cas13a family. In terms of assembly, crystals show the 3'-end of target RNA interacting with an adjacent protein molecule, and mutagenesis of those amino acid residues decreases target RNA cleavage, but it is not clear if this is physiological. A divalent metal cation serves as cofactor.

Its activity is regulated as follows. Target RNA acts as an activator for non-specific ssRNA cleavage; the target RNA and complementary crRNA must both be at least 20 nucleotides long to activate the HEPN-like catalytic pocket for RNase activity. Its function is as follows. CRISPR (clustered regularly interspaced short palindromic repeat), is an adaptive immune system that provides protection against mobile genetic elements (viruses, transposable elements and conjugative plasmids). CRISPR clusters contain sequences complementary to antecedent mobile elements (spacer sequences) and target invading nucleic acids. Unlike many single-component effectors, this CRISPR-Cas system targets RNA. CRISPR clusters are transcribed from pre-CRISPR RNA (crRNA) and processed into crRNA by this protein. pre-crRNA processing yields a 5'-OH and probably a 2',3'-cyclic phosphate. Also cleaves pre-crRNA from several other type VI-A CRISPR systems. Cleaves linear target ssRNA in a crRNA-dependent fashion, preferentially before U residues. Cleavage of target ssRNA is about 80-fold faster than pre-crRNA processing and uses a different active site. Binding a viable target RNA target activates this protein for non-specific RNA degradation in vitro (called collateral RNA degradation). Activation occurs with 10 fM target RNA. crRNA maturation is not essential for activation of RNA degradation, but lack of mature crRNA (due to mutagenesis) decreases activation levels. This system has a 3' protospacer flanking site in the target RNA (PFS), which is C and unavailable to base pair with crRNA (PFS is equivalent to PAM, the protospacer adjacent motif). This Leptotrichia buccalis (strain ATCC 14201 / DSM 1135 / JCM 12969 / NCTC 10249 / C-1013-b) protein is CRISPR-associated endoribonuclease Cas13a.